Here is a 310-residue protein sequence, read N- to C-terminus: DNA repair nuclease APEX1 (310 aa).

Residues 1–51 (MPKRAKKNEEGVDGEADNGTAAAKKEKKGKEPEAPILYEDPPEKLTSKDGR) are disordered. The span at 41 to 51 (PPEKLTSKDGR) shows a compositional bias: basic and acidic residues. 2 residues coordinate Mg(2+): Asp-63 and Glu-89. Residue Tyr-164 is part of the active site. 3 residues coordinate Mg(2+): Asp-203, Asn-205, and Asp-300. Asp-203 serves as the catalytic Proton donor/acceptor.

The protein belongs to the DNA repair enzymes AP/ExoA family. Mg(2+) is required as a cofactor. It depends on Mn(2+) as a cofactor.

The protein resides in the nucleus. Its subcellular location is the nucleolus. It is found in the nucleus speckle. It localises to the endoplasmic reticulum. The protein localises to the cytoplasm. The protein resides in the mitochondrion. It catalyses the reaction Exonucleolytic cleavage in the 3'- to 5'-direction to yield nucleoside 5'-phosphates.. Its function is as follows. Functions as an apurinic/apyrimidinic (AP) endodeoxyribonuclease in the DNA base excision repair (BER) pathway of DNA lesions induced by oxidative and alkylating agents. Initiates repair of AP sites in DNA by catalyzing hydrolytic incision of the phosphodiester backbone immediately adjacent to the damage, generating a single-strand break with 5'-deoxyribose phosphate and 3'-hydroxyl ends. Has 3'-5' exoribonuclease activity on mismatched deoxyribonucleotides at the 3' termini of nicked or gapped DNA molecules during short-patch BER. May also play a role in the epigenetic regulation of gene expression by participating in DNA demethylation. Required for passage through the mid-blastula transition MBT. May also act as an endoribonuclease involved in the control of single-stranded RNA metabolism. Has no redox activity. Binds DNA and RNA. The protein is DNA repair nuclease APEX1 (apex1) of Danio rerio (Zebrafish).